Here is a 238-residue protein sequence, read N- to C-terminus: uncharacterized protein (238 aa).

Disordered stretches follow at residues 1-51 (MPCT…ASCA) and 214-238 (ITVE…FPTA). Positions 16 to 31 (ATWRTARPAPRRCGSC) are enriched in low complexity.

This is an uncharacterized protein from Streptomyces griseus.